The chain runs to 424 residues: Histidine--tRNA ligase (424 aa).

It belongs to the class-II aminoacyl-tRNA synthetase family. As to quaternary structure, homodimer.

It is found in the cytoplasm. It carries out the reaction tRNA(His) + L-histidine + ATP = L-histidyl-tRNA(His) + AMP + diphosphate + H(+). In Escherichia coli O17:K52:H18 (strain UMN026 / ExPEC), this protein is Histidine--tRNA ligase.